Reading from the N-terminus, the 624-residue chain is Actin-related protein 8 (624 aa).

Met1 bears the N-acetylmethionine mark. A compositionally biased stretch (basic and acidic residues) spans 1 to 25 (MTQAEKGDTENGKEKGGEKEKEQRG). Positions 1-29 (MTQAEKGDTENGKEKGGEKEKEQRGVKRP) are disordered. 2 residues coordinate ATP: Ser55 and Thr56. Ser132 is modified (phosphoserine). 283-286 (DVGD) is an ATP binding site. Position 412 is a phosphoserine (Ser412). Positions 430 to 462 (SKQEQSAKATADRKSASKPIGFEGDLRGQSSDL) are disordered.

Belongs to the actin family. ARP8 subfamily. Component of the chromatin remodeling INO80 complex; specifically part of a complex module associated with the DBINO domain of INO80. Exists as monomers and dimers, but the dimer is most probably the biologically relevant form required for stable interactions with histones that exploits the twofold symmetry of the nucleosome core.

It localises to the nucleus. It is found in the chromosome. Its function is as follows. Plays an important role in the functional organization of mitotic chromosomes. Exhibits low basal ATPase activity, and unable to polymerize. In terms of biological role, proposed core component of the chromatin remodeling INO80 complex which is involved in transcriptional regulation, DNA replication and probably DNA repair. Required for the recruitment of INO80 (and probably the INO80 complex) to sites of DNA damage Strongly prefer nucleosomes and H3-H4 tetramers over H2A-H2B dimers, suggesting it may act as a nucleosome recognition module within the complex. The polypeptide is Actin-related protein 8 (ACTR8) (Pongo abelii (Sumatran orangutan)).